Reading from the N-terminus, the 339-residue chain is Phosphate acyltransferase (339 aa).

The protein belongs to the PlsX family. In terms of assembly, homodimer. Probably interacts with PlsY.

It is found in the cytoplasm. It carries out the reaction a fatty acyl-[ACP] + phosphate = an acyl phosphate + holo-[ACP]. Its pathway is lipid metabolism; phospholipid metabolism. Functionally, catalyzes the reversible formation of acyl-phosphate (acyl-PO(4)) from acyl-[acyl-carrier-protein] (acyl-ACP). This enzyme utilizes acyl-ACP as fatty acyl donor, but not acyl-CoA. This Brachyspira hyodysenteriae (strain ATCC 49526 / WA1) protein is Phosphate acyltransferase.